The chain runs to 910 residues: Valine--tRNA ligase (910 aa).

The short motif at 45-55 is the 'HIGH' region element; it reads PNVTGSLHMGH. A 'KMSKS' region motif is present at residues 554 to 558; that stretch reads KMSKS. K557 lines the ATP pocket. Residues 842-910 are a coiled coil; it reads DLQAEAARLA…TAESRIRDAS (69 aa).

Belongs to the class-I aminoacyl-tRNA synthetase family. ValS type 1 subfamily. Monomer.

The protein localises to the cytoplasm. It catalyses the reaction tRNA(Val) + L-valine + ATP = L-valyl-tRNA(Val) + AMP + diphosphate. Its function is as follows. Catalyzes the attachment of valine to tRNA(Val). As ValRS can inadvertently accommodate and process structurally similar amino acids such as threonine, to avoid such errors, it has a 'posttransfer' editing activity that hydrolyzes mischarged Thr-tRNA(Val) in a tRNA-dependent manner. This chain is Valine--tRNA ligase, found in Brucella suis biovar 1 (strain 1330).